Reading from the N-terminus, the 72-residue chain is Translation initiation factor IF-1 (72 aa).

The region spanning 1-72 (MSKEDSFEME…SKGRITYRAR (72 aa)) is the S1-like domain.

It belongs to the IF-1 family. Component of the 30S ribosomal translation pre-initiation complex which assembles on the 30S ribosome in the order IF-2 and IF-3, IF-1 and N-formylmethionyl-tRNA(fMet); mRNA recruitment can occur at any time during PIC assembly.

The protein localises to the cytoplasm. Its function is as follows. One of the essential components for the initiation of protein synthesis. Stabilizes the binding of IF-2 and IF-3 on the 30S subunit to which N-formylmethionyl-tRNA(fMet) subsequently binds. Helps modulate mRNA selection, yielding the 30S pre-initiation complex (PIC). Upon addition of the 50S ribosomal subunit IF-1, IF-2 and IF-3 are released leaving the mature 70S translation initiation complex. The polypeptide is Translation initiation factor IF-1 (Pseudomonas savastanoi pv. phaseolicola (strain 1448A / Race 6) (Pseudomonas syringae pv. phaseolicola (strain 1448A / Race 6))).